The following is a 189-amino-acid chain: 3-hydroxyanthranilate 3,4-dioxygenase (189 aa).

Arg-49 contacts O2. Fe cation-binding residues include His-53, Glu-59, and His-97. Glu-59 provides a ligand contact to substrate. Residues Arg-101 and Glu-112 each coordinate substrate. 4 residues coordinate Fe cation: Cys-127, Cys-130, Cys-165, and Cys-168.

It belongs to the 3-HAO family. As to quaternary structure, homodimer. The cofactor is Fe(2+).

It catalyses the reaction 3-hydroxyanthranilate + O2 = (2Z,4Z)-2-amino-3-carboxymuconate 6-semialdehyde. Its pathway is cofactor biosynthesis; NAD(+) biosynthesis; quinolinate from L-kynurenine: step 3/3. Catalyzes the oxidative ring opening of 3-hydroxyanthranilate to 2-amino-3-carboxymuconate semialdehyde, which spontaneously cyclizes to quinolinate. This is 3-hydroxyanthranilate 3,4-dioxygenase from Cupriavidus pinatubonensis (strain JMP 134 / LMG 1197) (Cupriavidus necator (strain JMP 134)).